Here is a 238-residue protein sequence, read N- to C-terminus: Phosphoribosylaminoimidazole-succinocarboxamide synthase (238 aa).

The protein belongs to the SAICAR synthetase family.

It catalyses the reaction 5-amino-1-(5-phospho-D-ribosyl)imidazole-4-carboxylate + L-aspartate + ATP = (2S)-2-[5-amino-1-(5-phospho-beta-D-ribosyl)imidazole-4-carboxamido]succinate + ADP + phosphate + 2 H(+). Its pathway is purine metabolism; IMP biosynthesis via de novo pathway; 5-amino-1-(5-phospho-D-ribosyl)imidazole-4-carboxamide from 5-amino-1-(5-phospho-D-ribosyl)imidazole-4-carboxylate: step 1/2. The protein is Phosphoribosylaminoimidazole-succinocarboxamide synthase of Marinomonas sp. (strain MWYL1).